A 179-amino-acid chain; its full sequence is MTFVLSSSIERLKEKIRTIPDFPRPGVMFKDITPAIGEGQFFRLILTIFIARYQKKKIDKIAAIDARGFIFAGALAHALGVGIIPIRKKGKLPYKTYELHYKSEYGEEVLTIHQDAISKGENILIVDDVLATGNTARTAALLVEKCGGNLMELGFLAELSNLKGRERLFPFPCYSILQF.

It belongs to the purine/pyrimidine phosphoribosyltransferase family. In terms of assembly, homodimer.

It localises to the cytoplasm. It catalyses the reaction AMP + diphosphate = 5-phospho-alpha-D-ribose 1-diphosphate + adenine. Its pathway is purine metabolism; AMP biosynthesis via salvage pathway; AMP from adenine: step 1/1. Functionally, catalyzes a salvage reaction resulting in the formation of AMP, that is energically less costly than de novo synthesis. The protein is Adenine phosphoribosyltransferase of Methylacidiphilum infernorum (isolate V4) (Methylokorus infernorum (strain V4)).